The primary structure comprises 890 residues: Protein FAM171A1 (890 aa).

The N-terminal stretch at 1–21 (MSRSATLLLCLLGCHVWKAVT) is a signal peptide. At 22–303 (KTLREPGAGA…VTQDITTYHT (282 aa)) the chain is on the extracellular side. Residues asparagine 159, asparagine 190, and asparagine 194 are each glycosylated (N-linked (GlcNAc...) asparagine). Residues 304–324 (VFLLAILGGMAFILLVLLCLL) form a helical membrane-spanning segment. Topologically, residues 325–890 (LYYCRRKCLK…ERPLMAFNIK (566 aa)) are cytoplasmic. Phosphoserine occurs at positions 358, 360, 371, 422, 443, and 525. Disordered regions lie at residues 730–759 (AGRN…RGDA) and 818–890 (EGSS…FNIK). Positions 747–757 (NEPKSARKGRG) are enriched in basic and acidic residues. Positions 822 to 833 (RRSGGQLPSLQE) are enriched in polar residues. Residues serine 849 and serine 855 each carry the phosphoserine modification. Residues 858-869 (EEEEDDDDDDQG) are compositionally biased toward acidic residues. A compositionally biased stretch (basic and acidic residues) spans 870–883 (EDKKSPWQKREERP).

The protein belongs to the FAM171 family. Interacts with ADAM10, NSG1 and OAZ1. In terms of tissue distribution, expressed in heart, brain, liver, skeletal muscle, kidney and pancreas. In brain, expressed by glia, pyramidal neurons and astrocytes (at protein level). Highly expressed in placental trophoblasts.

It localises to the cell membrane. Functionally, involved in the regulation of the cytoskeletal dynamics, plays a role in actin stress fiber formation. The protein is Protein FAM171A1 of Homo sapiens (Human).